The primary structure comprises 224 residues: uncharacterized protein (224 aa).

The helical transmembrane segment at 21–41 (LTVILIIPIVYLGVCGCFEIV) threads the bilayer.

Its subcellular location is the membrane. This is an uncharacterized protein from Methanocaldococcus jannaschii (strain ATCC 43067 / DSM 2661 / JAL-1 / JCM 10045 / NBRC 100440) (Methanococcus jannaschii).